The primary structure comprises 1446 residues: Toll-like receptor 7 (1446 aa).

The signal sequence occupies residues 1–16 (MAAILLLLLGFSWSLA). Residues 17–1049 (VESALAPKES…QHGIPESYIP (1033 aa)) lie on the Extracellular side of the membrane. LRR repeat units follow at residues 133 to 156 (LQTL…AFEG), 158 to 180 (ATLK…TLEL), 188 to 211 (LKQL…FLCP), 213 to 235 (GNLQ…GFAD), 246 to 270 (GSEL…GISR), 271 to 294 (LRRL…ALAG), 295 to 318 (LASL…LFAG), 320 to 342 (KELR…LFHR), 344 to 368 (EQLL…TFAG), 369 to 392 (LIRL…TFKE), 393 to 416 (LYFL…AFLP), 417 to 440 (LYNL…LFNG), 442 to 464 (YVLS…VFKN), 465 to 488 (CSDL…LQDL), 489 to 511 (AMLR…SFKN), 513 to 535 (HQLT…MFQD), 536 to 559 (LPRL…SFDK), 561 to 582 (FELE…VFAT), 584 to 605 (VSLL…AFIP), 606 to 629 (SNLK…KLQE), 631 to 652 (IRVK…MSIP), 653 to 675 (NTIE…AFVD), and 677 to 699 (ANLA…QLRV). Residues 716-773 (NPFECDCTMDWLQRINNLTTRQHPRVMDMANIECVMPHARGAAVRPLSGLRPQDFLCR) enclose the LRRCT domain. 3 cysteine pairs are disulfide-bonded: Cys722–Cys772, Cys796–Cys802, and Cys800–Cys815. LRR repeat units follow at residues 828 to 851 (PMDS…AFIG), 852 to 875 (RKNL…TFAS), 876 to 899 (LASL…EFEQ), 900 to 923 (LSAL…TLAP), 925 to 947 (AALE…QMHA), and 951 to 979 (GTRL…SYVA). Cys966 and Cys993 are disulfide-bonded. A helical membrane pass occupies residues 1050-1070 (LLAAALALLFLLVVIAMVFAF). Topologically, residues 1071-1446 (RESLRIWLFA…QGPHVQAYLV (376 aa)) are cytoplasmic. The TIR domain occupies 1096 to 1233 (KLYDAVLLHS…HFWEKLRYAL (138 aa)). 2 disordered regions span residues 1301-1332 (QNYS…NHHL) and 1388-1446 (RPKR…AYLV). Positions 1395 to 1413 (HLQQAQAGTLGSKASQAAH) are enriched in polar residues. Positions 1414-1426 (QQQQQQQQQQQQQ) are enriched in low complexity. Over residues 1427–1439 (PNPTAVSGQQQGP) the composition is skewed to polar residues.

It belongs to the Toll-like receptor family. Expressed in the fan-shaped body and the ellipsoid body, which are components of the locomotion center in the CNS (at protein level).

Its subcellular location is the cell membrane. Its function is as follows. Toll-related receptor which binds to the neurotrophins NT1 and spz5. Essential for antiviral autophagy, it detects and binds to the vesicular stomatitis virus (vsv) following infection. This role is likely to be independent of the canonical Toll, immune deficiency, and JAK-STAT signaling pathways. Functions in olfactory circuit assembly by promoting synaptic partner matching between olfactory receptor neurons (ORN) axons and projection neurons (PN) dendrites partners in the antennal lobe. Function in the Va1d ORNs is necessary and sufficient for correct targeting to their partner PN dendrites. Also involved in the targeting of other classes of ORN axons. Functions with Toll-6 to regulate motor axon targeting and neuronal survival in the central nervous system (CNS). May be an upstream component of the NF-kappa-B (rel) regulatory cascade. This is Toll-like receptor 7 from Drosophila melanogaster (Fruit fly).